A 203-amino-acid polypeptide reads, in one-letter code: Small ribosomal subunit protein uS4c (203 aa).

A disordered region spans residues 15–43; the sequence is LGSLPGLTSKRPRSGSDLRNQSRSGKRSQ. Residues 89–169 enclose the S4 RNA-binding domain; it reads MRLDNILFRL…LPKHLTLHSL (81 aa).

This sequence belongs to the universal ribosomal protein uS4 family. In terms of assembly, part of the 30S ribosomal subunit. Contacts protein S5. The interaction surface between S4 and S5 is involved in control of translational fidelity.

The protein resides in the plastid. It is found in the chloroplast. In terms of biological role, one of the primary rRNA binding proteins, it binds directly to 16S rRNA where it nucleates assembly of the body of the 30S subunit. With S5 and S12 plays an important role in translational accuracy. The sequence is that of Small ribosomal subunit protein uS4c (rps4) from Illicium oligandrum (Star anise).